Reading from the N-terminus, the 55-residue chain is uncharacterized protein (55 aa).

The protein localises to the plastid. This is an uncharacterized protein from Cuscuta reflexa (Southern Asian dodder).